Reading from the N-terminus, the 592-residue chain is BTB/POZ domain-containing protein At5g03250 (592 aa).

A BTB domain is found at 28-98 (SDVTIEVGDM…CYGVKIELTA (71 aa)). Positions 217–502 (DWWFDDASFL…VQVLFFEQLR (286 aa)) constitute an NPH3 domain. Y443 carries the post-translational modification Phosphotyrosine.

It belongs to the NPH3 family.

It functions in the pathway protein modification; protein ubiquitination. In terms of biological role, may act as a substrate-specific adapter of an E3 ubiquitin-protein ligase complex (CUL3-RBX1-BTB) which mediates the ubiquitination and subsequent proteasomal degradation of target proteins. The chain is BTB/POZ domain-containing protein At5g03250 from Arabidopsis thaliana (Mouse-ear cress).